An 85-amino-acid polypeptide reads, in one-letter code: Cysteine-rich venom protein 1 (85 aa).

A signal peptide spans 1 to 21; the sequence is MCRYALIVLVVVVVATNLSEA. 5 disulfides stabilise this stretch: C29-C63, C38-C59, C42-C53, C46-C84, and C65-C78. The TIL domain occupies 29–84; the sequence is CEPNRIYKTCGPACPPTCEDPDPDCNETPQCKAGCFCIPGLIENMKGGNCISPSLC.

It belongs to the serine protease inhibitor-like (TIL domain-containing) family. Expressed by the venom gland.

It localises to the secreted. May be a phenoloxidase inhibitor that stabilizes or inhibits venom phenoloxidase while it is stored in the venom sac. This Pimpla hypochondriaca (Parasitoid wasp) protein is Cysteine-rich venom protein 1.